Here is a 241-residue protein sequence, read N- to C-terminus: Parkin coregulated gene protein homolog (241 aa).

As to quaternary structure, microtubule inner protein component of sperm flagellar doublet microtubules. Forms a large molecular chaperone complex containing heat shock proteins 70 and 90 and chaperonin components. Interacts with STIP1, PRKN, GPR37, HSPA8, TCP1/CCT1, CCT2, CCT3, CCT4, CCT5, CCT6A, CCT7 and CCT8. Interacts with MEIG1.

It localises to the cytoplasm. The protein localises to the cytoskeleton. The protein resides in the cilium axoneme. Its subcellular location is the flagellum axoneme. In terms of biological role, microtubule inner protein (MIP) part of the dynein-decorated doublet microtubules (DMTs) in cilia axoneme, which is required for motile cilia beating. Suppresses cell death induced by accumulation of unfolded Pael receptor (Pael-R, a substrate of Parkin). Facilitates the formation of inclusions consisting of Pael-R, molecular chaperones, protein degradation molecules and itself when proteasome is inhibited. May play an important role in the formation of Lewy bodies and protection of dopaminergic neurons against Parkinson disease. The protein is Parkin coregulated gene protein homolog (Pacrg) of Mus musculus (Mouse).